The chain runs to 99 residues: Nucleoid-associated protein EbfC (99 aa).

It belongs to the YbaB/EbfC family. Homodimer.

The protein resides in the cytoplasm. It is found in the nucleoid. Its function is as follows. Binds to DNA and alters its conformation. May be involved in regulation of gene expression, nucleoid organization and DNA protection. The sequence is that of Nucleoid-associated protein EbfC from Borreliella afzelii (strain PKo) (Borrelia afzelii).